The chain runs to 293 residues: Oxidoreductase R2 (293 aa).

It belongs to the asaB hydroxylase/desaturase family.

It participates in secondary metabolite biosynthesis. In terms of biological role, oxidoreductase; part of the gene cluster that mediates the biosynthesis of squalestatin S1 (SQS1, also known as zaragozic acid A), a heavily oxidized fungal polyketide that offers potent cholesterol lowering activity by targeting squalene synthase (SS). SQS1 is composed of a 2,8-dioxobicyclic[3.2.1]octane-3,4,5-tricarboxyclic acid core that is connected to two lipophilic polyketide arms. These initial steps feature the priming of an unusual benzoic acid starter unit onto the highly reducing polyketide synthase pks2, followed by oxaloacetate extension and product release to generate a tricarboxylic acid containing product. The phenylalanine ammonia lyase (PAL) M7 and the acyl-CoA ligase M9 are involved in transforming phenylalanine into benzoyl-CoA. The citrate synthase-like protein R3 is involved in connecting the C-alpha-carbons of the hexaketide chain and oxaloacetate to afford the tricarboxylic acid unit. The potential hydrolytic enzymes, M8 and M10, are in close proximity to pks2 and may participate in product release. On the other side, the tetraketide arm is synthesized by a the squalestatin tetraketide synthase pks1 and enzymatically esterified to the core in the last biosynthetic step, by the acetyltransferase M4. The biosynthesis of the tetraketide must involve 3 rounds of chain extension. After the first and second rounds methyl-transfer occurs, and in all rounds of extension the ketoreductase and dehydratase are active. The enoyl reductase and C-MeT of pks1 are not active in the final round of extension. The acetyltransferase M4 appears to have a broad substrate selectivity for its acyl CoA substrate, allowing the in vitro synthesis of novel squalestatins. The biosynthesis of SQS1 requires several oxidative steps likely performed by oxidoreductases M1, R1 and R2. Finally, in support of the identification of the cluster as being responsible for SQS1 production, the cluster contains a gene encoding a putative squalene synthase (SS) R6, suggesting a likely mechanism for self-resistance. The sequence is that of Oxidoreductase R2 from Phoma sp. (strain ATCC 20986 / MF5453).